Consider the following 93-residue polypeptide: Large ribosomal subunit protein bL31 (93 aa).

The segment at 68–93 (GSADAAADEKKPDAKNNNKDNTSKED) is disordered. Basic and acidic residues predominate over residues 74–93 (ADEKKPDAKNNNKDNTSKED).

It belongs to the bacterial ribosomal protein bL31 family. Type A subfamily. In terms of assembly, part of the 50S ribosomal subunit.

In terms of biological role, binds the 23S rRNA. The protein is Large ribosomal subunit protein bL31 of Prochlorococcus marinus (strain MIT 9313).